A 219-amino-acid polypeptide reads, in one-letter code: Thiopurine S-methyltransferase (219 aa).

S-adenosyl-L-methionine is bound by residues Trp-10, Leu-45, Glu-66, and Arg-123.

The protein belongs to the class I-like SAM-binding methyltransferase superfamily. TPMT family.

The protein resides in the cytoplasm. It carries out the reaction S-adenosyl-L-methionine + a thiopurine = S-adenosyl-L-homocysteine + a thiopurine S-methylether.. The chain is Thiopurine S-methyltransferase from Bordetella bronchiseptica (strain ATCC BAA-588 / NCTC 13252 / RB50) (Alcaligenes bronchisepticus).